The sequence spans 128 residues: Protein Wnt-2b-B (128 aa).

2 disulfide bridges follow: C3/C16 and C5/C11. S8 carries the O-palmitoleoyl serine; by PORCN lipid modification. N48 is a glycosylation site (N-linked (GlcNAc...) asparagine). 2 disulfides stabilise this stretch: C90–C105 and C127–C128.

The protein belongs to the Wnt family. In terms of processing, palmitoleoylation is required for efficient binding to frizzled receptors. Depalmitoleoylation leads to Wnt signaling pathway inhibition.

The protein localises to the secreted. The protein resides in the extracellular space. It is found in the extracellular matrix. In terms of biological role, ligand for members of the frizzled family of seven transmembrane receptors. Functions in the canonical Wnt/beta-catenin signaling pathway. The protein is Protein Wnt-2b-B (wnt2b-b) of Xenopus laevis (African clawed frog).